We begin with the raw amino-acid sequence, 863 residues long: Oleate activated transcription factor 3 (863 aa).

Residues 18-47 constitute a DNA-binding region (zn(2)-C6 fungal-type); it reads VCTNCKKRKSKCDRTKPCGTCVRLGDVDSC. The span at 52-63 shows a compositional bias: polar residues; the sequence is DSSGQPESSPSL. The interval 52-99 is disordered; the sequence is DSSGQPESSPSLNDADPLRKQSTPAERISPGFIKKRRSSQTRQDEDHW.

Belongs to the OAF3 family.

Its subcellular location is the cytoplasm. The protein resides in the nucleus. It localises to the mitochondrion. In terms of biological role, transcriptional inhibitor with a significantly increased number of target genes in response to oleate. The protein is Oleate activated transcription factor 3 (OAF3) of Saccharomyces cerevisiae (strain ATCC 204508 / S288c) (Baker's yeast).